Here is a 461-residue protein sequence, read N- to C-terminus: Probable tubulin polyglutamylase TTLL9 (461 aa).

Polar residues predominate over residues 1-10 (MSRQKSQTSK). The segment at 1-20 (MSRQKSQTSKGHGASKGKER) is disordered. One can recognise a TTL domain in the interval 22–402 (QRTLIRFKTT…EARLTGKEKR (381 aa)). ATP contacts are provided by residues K149 and 155 to 156 (QG). Q155 contacts a protein. Positions 186-197 (QATRANVNPSGS) are enriched in polar residues. The disordered stretch occupies residues 186–208 (QATRANVNPSGSHDTRSSDDQKD). Over residues 198–208 (HDTRSSDDQKD) the composition is skewed to basic and acidic residues. ATP is bound by residues 218 to 221 (QRYV) and 231 to 233 (KFD). R257 provides a ligand contact to L-glutamate. 276–277 (TN) serves as a coordination point for ATP. K294 is an L-glutamate binding site. Mg(2+) contacts are provided by D348, E361, and N363. K379 lines the L-glutamate pocket.

It belongs to the tubulin--tyrosine ligase family. Mg(2+) is required as a cofactor.

It is found in the cytoplasm. Its subcellular location is the cytoskeleton. The protein localises to the cilium basal body. It localises to the flagellum axoneme. It carries out the reaction (L-glutamyl)(n)-gamma-L-glutamyl-L-glutamyl-[protein] + L-glutamate + ATP = (L-glutamyl)(n+1)-gamma-L-glutamyl-L-glutamyl-[protein] + ADP + phosphate + H(+). Probable tubulin polyglutamylase that generates side chains of glutamate on the gamma-carboxyl group of specific glutamate residues within the C-terminal tail of target proteins. Similar to TTLL1, may acquire enzymatic activity only in complex with other proteins as it is most likely lacking domains important for autonomous activity. Mediates tubulin polyglutamylation which induces establishment of microtubule heterogeneity in sperm flagella, thereby playing a role in normal motile flagella axoneme structure and sperm flagella beating pattern. The sequence is that of Probable tubulin polyglutamylase TTLL9 (Ttll9) from Rattus norvegicus (Rat).